Here is a 1108-residue protein sequence, read N- to C-terminus: Lon protease homolog, mitochondrial (1108 aa).

Residues 1–62 constitute a mitochondrion transit peptide; the sequence is MLRGQSLPWR…RAFSTSSIRR (62 aa). Disordered regions lie at residues 24–192 and 299–318; these read PLLP…QKPS and LPPG…PEKK. Low complexity predominate over residues 36–53; that stretch reads RSNLSISRLSRSPSLSPR. Composition is skewed to basic and acidic residues over residues 78–103 and 119–146; these read EQKD…DSTG and KVAG…KSDP. The segment covering 161-171 has biased composition (polar residues); it reads SDTKSSASNGG. Composition is skewed to basic and acidic residues over residues 174 to 188 and 309 to 318; these read DGGR…DRAL and NTEDKAPEKK. The 253-residue stretch at 200 to 452 folds into the Lon N-terminal domain; sequence VMAIPIAKRP…KALVVLKKEL (253 aa). 605–612 provides a ligand contact to ATP; the sequence is GPPGVGKT. Positions 821-855 are enriched in basic and acidic residues; the sequence is DKALTDEGKAAQEESKKETEEGDPKDPPADPEKST. The disordered stretch occupies residues 821–862; sequence DKALTDEGKAAQEESKKETEEGDPKDPPADPEKSTTETPRLA. In terms of domain architecture, Lon proteolytic spans 895 to 1081; sequence TFPPGVTMGL…SEVFNILFAE (187 aa). Catalysis depends on residues serine 987 and lysine 1030.

The protein belongs to the peptidase S16 family. In terms of assembly, homohexamer or homoheptamer. Organized in a ring with a central cavity.

The protein resides in the mitochondrion matrix. It catalyses the reaction Hydrolysis of proteins in presence of ATP.. ATP-dependent serine protease that mediates the selective degradation of misfolded, unassembled or oxidatively damaged polypeptides as well as certain short-lived regulatory proteins in the mitochondrial matrix. May also have a chaperone function in the assembly of inner membrane protein complexes. Participates in the regulation of mitochondrial gene expression and in the maintenance of the integrity of the mitochondrial genome. Binds to mitochondrial DNA in a site-specific manner. This Aspergillus fumigatus (strain ATCC MYA-4609 / CBS 101355 / FGSC A1100 / Af293) (Neosartorya fumigata) protein is Lon protease homolog, mitochondrial (pim1).